A 521-amino-acid chain; its full sequence is Cytochrome P450 monooxygenase astF (521 aa).

The helical transmembrane segment at 14–34 (TMATFLLPVAIGTIILLFLYG) threads the bilayer. N-linked (GlcNAc...) asparagine glycans are attached at residues Asn198, Asn218, Asn268, and Asn281. Cys430 provides a ligand contact to heme.

It belongs to the cytochrome P450 family. The cofactor is heme.

Its subcellular location is the membrane. It participates in secondary metabolite biosynthesis; terpenoid biosynthesis. Functionally, cytochrome P450 monooxygenase; part of the gene cluster that mediates the biosynthesis of astellolides, drimane-type sesquiterpene esters that show antimicrobial, anti-inflammatory, and anti-tumor activities. The first step in astellolide biosynthesis is performed by the sesquiterpene cyclase astC that catalyzes the formation of drimanyl pyrophosphate from farnesyl pyrophosphate. Drimanyl pyrophosphate is then dephosphorylated by the sesquiterpene phosphatase astI to produce drimanyl monophosphate which is further dephosphorylated to drim-8-ene-11-ol by atsK. Drim-8-ene-11-ol is converted to confertifolin, probably by the cytochrome P450 monooxygenase astD and/or the dehydrogenase astE. The cytochrome P450 monooxygenases astB, astF and astJ then hydroxylate confertifolin at C6, C14, or C15 to form trihydroxy confertifolin. The nonribosomal peptide synthetase astA catalyzes ester bond formation between trihydroxy contifolin and benzoic acid (BA) or 4-hydroxy benzoic acid (4HBA), leading to the formation of dideacetyl astellolides A and B, respectively. Finally, the O-acetyltransferase astG converts dideacetyl astellolides A and B into deacetyl astellolides A and B. This Aspergillus oryzae (strain ATCC 42149 / RIB 40) (Yellow koji mold) protein is Cytochrome P450 monooxygenase astF.